The sequence spans 131 residues: Small ribosomal subunit protein bS6 (131 aa).

The segment at 98–131 is disordered; that stretch reads EASPMVKAKDERRERREDFANETADDSEAGDSEE. The segment covering 104–116 has biased composition (basic and acidic residues); the sequence is KAKDERRERREDF. A compositionally biased stretch (acidic residues) spans 120-131; it reads TADDSEAGDSEE.

Belongs to the bacterial ribosomal protein bS6 family.

Functionally, binds together with bS18 to 16S ribosomal RNA. This chain is Small ribosomal subunit protein bS6, found in Klebsiella pneumoniae (strain 342).